Consider the following 771-residue polypeptide: DnaJ homolog subfamily C member 16 (771 aa).

Positions 1-25 (MELKRLSISWQFLIVLVLILQSLSA) are cleaved as a signal peptide. Residues 26–532 (LDFDPYRVLG…ESLLHSNWRE (507 aa)) are Cytoplasmic-facing. Residues 29 to 93 (DPYRVLGVSR…EKRTNYDHYG (65 aa)) enclose the J domain. The 129-residue stretch at 116–244 (FYFDESFFHF…LRQFVESLLP (129 aa)) folds into the Thioredoxin domain. Residues 533–553 (MMPLLSLIFSALFILFGTVIV) traverse the membrane as a helical; Anchor for type IV membrane protein segment. The Extracellular segment spans residues 554 to 771 (QAFSDSNEER…FYIPSWPELD (218 aa)). A disordered region spans residues 559-590 (SNEERESHPPDKEEVPEKAGKTEPSFTKESSS). A compositionally biased stretch (basic and acidic residues) spans 560-579 (NEERESHPPDKEEVPEKAGK). An N-linked (GlcNAc...) asparagine glycan is attached at Asn-628.

The protein resides in the endoplasmic reticulum membrane. In terms of biological role, plays an important role in regulating the size of autophagosomes during the formation process. This chain is DnaJ homolog subfamily C member 16 (Dnajc16), found in Rattus norvegicus (Rat).